Here is a 266-residue protein sequence, read N- to C-terminus: Glucosamine-6-phosphate deaminase (266 aa).

Residue D72 is the Proton acceptor; for enolization step of the active site. The active-site For ring-opening step is the D141. H143 functions as the Proton acceptor; for ring-opening step in the catalytic mechanism. The active-site For ring-opening step is E148.

It belongs to the glucosamine/galactosamine-6-phosphate isomerase family. NagB subfamily. As to quaternary structure, homohexamer.

The enzyme catalyses alpha-D-glucosamine 6-phosphate + H2O = beta-D-fructose 6-phosphate + NH4(+). The protein operates within amino-sugar metabolism; N-acetylneuraminate degradation; D-fructose 6-phosphate from N-acetylneuraminate: step 5/5. With respect to regulation, allosterically activated by N-acetylglucosamine 6-phosphate (GlcNAc6P). In terms of biological role, catalyzes the reversible isomerization-deamination of glucosamine 6-phosphate (GlcN6P) to form fructose 6-phosphate (Fru6P) and ammonium ion. This chain is Glucosamine-6-phosphate deaminase, found in Salmonella typhi.